The chain runs to 449 residues: Na(+)/H(+) antiporter NhaA 2 (449 aa).

11 helical membrane-spanning segments follow: residues 32 to 52 (IEAT…TLSN), 87 to 107 (GLMT…VVLG), 114 to 134 (MVAL…GLYL), 145 to 165 (GWGV…ALLG), 174 to 194 (VFLL…VAVG), 202 to 222 (TALA…LLGV), 233 to 253 (AIIW…GVIL), 318 to 338 (WVAF…PITI), 347 to 367 (LAVM…FAWL), 382 to 402 (WGGL…ALFI), and 417 to 437 (LGIL…LCAL).

The protein belongs to the NhaA Na(+)/H(+) (TC 2.A.33) antiporter family.

It localises to the cell inner membrane. It catalyses the reaction Na(+)(in) + 2 H(+)(out) = Na(+)(out) + 2 H(+)(in). Its function is as follows. Na(+)/H(+) antiporter that extrudes sodium in exchange for external protons. The protein is Na(+)/H(+) antiporter NhaA 2 of Acidiphilium cryptum (strain JF-5).